The chain runs to 493 residues: Transcript termination protein A18 (493 aa).

Residues methionine 100 to serine 256 form the Helicase ATP-binding domain. Residue leucine 113–threonine 120 coordinates ATP. The DESH box motif lies at aspartate 206–histidine 209.

This sequence belongs to the helicase family. Poxviruses subfamily. Interacts with G2. Might be part of a transcription complex composed at least of G2, A18, and H5.

It localises to the virion. Functionally, DNA helicase which seems to act as a postreplicative transcription termination factor. Involved in ATP-dependent release of nascent RNA. Forms a stable complex with single-stranded DNA, and to a lesser extent RNA. The sequence is that of Transcript termination protein A18 from Rabbitpox virus (strain Utrecht) (RPV).